A 475-amino-acid chain; its full sequence is Ribulose bisphosphate carboxylase large chain (475 aa).

The propeptide occupies 1–2 (MS). P3 carries the post-translational modification N-acetylproline. An N6,N6,N6-trimethyllysine modification is found at K14. Positions 123 and 173 each coordinate substrate. The active-site Proton acceptor is K175. K177 is a substrate binding site. Residues K201, D203, and E204 each contribute to the Mg(2+) site. Position 201 is an N6-carboxylysine (K201). The Proton acceptor role is filled by H294. Substrate contacts are provided by R295, H327, and S379.

Belongs to the RuBisCO large chain family. Type I subfamily. As to quaternary structure, heterohexadecamer of 8 large chains and 8 small chains; disulfide-linked. The disulfide link is formed within the large subunit homodimers. Mg(2+) is required as a cofactor. In terms of processing, the disulfide bond which can form in the large chain dimeric partners within the hexadecamer appears to be associated with oxidative stress and protein turnover.

It localises to the plastid. The protein resides in the chloroplast. The enzyme catalyses 2 (2R)-3-phosphoglycerate + 2 H(+) = D-ribulose 1,5-bisphosphate + CO2 + H2O. It carries out the reaction D-ribulose 1,5-bisphosphate + O2 = 2-phosphoglycolate + (2R)-3-phosphoglycerate + 2 H(+). RuBisCO catalyzes two reactions: the carboxylation of D-ribulose 1,5-bisphosphate, the primary event in carbon dioxide fixation, as well as the oxidative fragmentation of the pentose substrate in the photorespiration process. Both reactions occur simultaneously and in competition at the same active site. The chain is Ribulose bisphosphate carboxylase large chain from Pinus edulis (Pinyon pine).